The primary structure comprises 434 residues: Nicotinate phosphoribosyltransferase (434 aa).

A Phosphohistidine; by autocatalysis modification is found at His242.

The protein belongs to the NAPRTase family. Post-translationally, transiently phosphorylated on a His residue during the reaction cycle. Phosphorylation strongly increases the affinity for substrates and increases the rate of nicotinate D-ribonucleotide production. Dephosphorylation regenerates the low-affinity form of the enzyme, leading to product release.

It carries out the reaction nicotinate + 5-phospho-alpha-D-ribose 1-diphosphate + ATP + H2O = nicotinate beta-D-ribonucleotide + ADP + phosphate + diphosphate. It functions in the pathway cofactor biosynthesis; NAD(+) biosynthesis; nicotinate D-ribonucleotide from nicotinate: step 1/1. In terms of biological role, catalyzes the synthesis of beta-nicotinate D-ribonucleotide from nicotinate and 5-phospho-D-ribose 1-phosphate at the expense of ATP. The polypeptide is Nicotinate phosphoribosyltransferase (Rhizobium rhizogenes (strain K84 / ATCC BAA-868) (Agrobacterium radiobacter)).